A 431-amino-acid polypeptide reads, in one-letter code: Histidinol dehydrogenase (431 aa).

NAD(+)-binding residues include Tyr-127, Gln-185, and Asn-208. Substrate contacts are provided by Ser-234, Gln-256, and His-259. 2 residues coordinate Zn(2+): Gln-256 and His-259. Active-site proton acceptor residues include Glu-323 and His-324. Residues His-324, Asp-357, Glu-411, and His-416 each contribute to the substrate site. Asp-357 lines the Zn(2+) pocket. Residue His-416 participates in Zn(2+) binding.

The protein belongs to the histidinol dehydrogenase family. Zn(2+) serves as cofactor.

It carries out the reaction L-histidinol + 2 NAD(+) + H2O = L-histidine + 2 NADH + 3 H(+). It functions in the pathway amino-acid biosynthesis; L-histidine biosynthesis; L-histidine from 5-phospho-alpha-D-ribose 1-diphosphate: step 9/9. In terms of biological role, catalyzes the sequential NAD-dependent oxidations of L-histidinol to L-histidinaldehyde and then to L-histidine. The protein is Histidinol dehydrogenase of Vibrio vulnificus (strain YJ016).